Reading from the N-terminus, the 173-residue chain is Large ribosomal subunit protein uL10 (173 aa).

The protein belongs to the universal ribosomal protein uL10 family. In terms of assembly, part of the ribosomal stalk of the 50S ribosomal subunit. The N-terminus interacts with L11 and the large rRNA to form the base of the stalk. The C-terminus forms an elongated spine to which L12 dimers bind in a sequential fashion forming a multimeric L10(L12)X complex.

Forms part of the ribosomal stalk, playing a central role in the interaction of the ribosome with GTP-bound translation factors. This is Large ribosomal subunit protein uL10 from Bifidobacterium longum (strain DJO10A).